A 241-amino-acid chain; its full sequence is MRKTIIAGNWKMYKTQLEAKEFLEGLMSQLTKTPEEREVVLCTPFTALDFMSKILHGSLIRLGAQNVHWEDEGAYTGEISGLMLKDVGVSYVIVGHSERRQYFGETDETVNMRLKAAQKHGLTPILCVGETKQQRDSGETESHIFSQLANDLVDVDQENLVIAYEPIWAIGTGDTCEAKEANRVIGLIRGKLNNSNVTIQYGGSVKPNNVDDIMAQEEIDGALVGGASLNPESFSRLVNYQ.

Substrate is bound at residue 9-11; sequence NWK. The active-site Electrophile is H96. The active-site Proton acceptor is the E165. Substrate-binding positions include G171, S204, and 225–226; that span reads GG.

The protein belongs to the triosephosphate isomerase family. In terms of assembly, homodimer.

The protein resides in the cytoplasm. It catalyses the reaction D-glyceraldehyde 3-phosphate = dihydroxyacetone phosphate. The protein operates within carbohydrate biosynthesis; gluconeogenesis. It functions in the pathway carbohydrate degradation; glycolysis; D-glyceraldehyde 3-phosphate from glycerone phosphate: step 1/1. In terms of biological role, involved in the gluconeogenesis. Catalyzes stereospecifically the conversion of dihydroxyacetone phosphate (DHAP) to D-glyceraldehyde-3-phosphate (G3P). This chain is Triosephosphate isomerase, found in Trichodesmium erythraeum (strain IMS101).